A 363-amino-acid polypeptide reads, in one-letter code: D-alanine--D-alanine ligase (363 aa).

The 207-residue stretch at 146 to 352 (KLCAADAGVA…FTALIDKLLH (207 aa)) folds into the ATP-grasp domain. Position 179-234 (179-234 (DSTFGYPLFVKPASLGSSVGISKVHLPAALPEALKVACSYDRKILVEAAVSGKEIE)) interacts with ATP. Aspartate 305, glutamate 319, and asparagine 321 together coordinate Mg(2+).

It belongs to the D-alanine--D-alanine ligase family. Mg(2+) serves as cofactor. It depends on Mn(2+) as a cofactor.

It is found in the cytoplasm. It carries out the reaction 2 D-alanine + ATP = D-alanyl-D-alanine + ADP + phosphate + H(+). It participates in cell wall biogenesis; peptidoglycan biosynthesis. Cell wall formation. The polypeptide is D-alanine--D-alanine ligase (Chlorobium limicola (strain DSM 245 / NBRC 103803 / 6330)).